The sequence spans 462 residues: Lipase A (462 aa).

The N-terminal stretch at 1-21 (MRVSLRSITSLLAAATAAVLA) is a signal peptide. Cysteine 122 and cysteine 294 form a disulfide bridge. Residues serine 205, aspartate 355, and histidine 387 each act as charge relay system in the active site. Cysteine 371 and cysteine 415 are disulfide-bonded.

The protein belongs to the AB hydrolase superfamily. Lipase family. In terms of assembly, monomer.

It is found in the secreted. It catalyses the reaction a triacylglycerol + H2O = a diacylglycerol + a fatty acid + H(+). Hydrolyzes triglycerides, with a preference for substrates with short-chain lengths (C4 to C8). Has the highest activity with tributyrin (C4), followed by tricaproin (C6) and tricaprylin (C8). Can also hydrolyze vinylacetate (C2) and triolein (C18), but with lower efficiency. Has no activity with tripalmitin (C16). This chain is Lipase A, found in Moesziomyces aphidis (Pseudozyma aphidis).